The following is a 232-amino-acid chain: UPF0758 protein Clos_1766 (232 aa).

An MPN domain is found at 110–232; it reads KIKGPDDVSN…YFSMKEHKLI (123 aa). Residues His-181, His-183, and Asp-194 each contribute to the Zn(2+) site. The short motif at 181–194 is the JAMM motif element; that stretch reads HNHPSGDPNPSGED.

Belongs to the UPF0758 family.

In Alkaliphilus oremlandii (strain OhILAs) (Clostridium oremlandii (strain OhILAs)), this protein is UPF0758 protein Clos_1766.